Here is a 303-residue protein sequence, read N- to C-terminus: N-acetyl-D-glucosamine kinase (303 aa).

ATP is bound by residues 4–11 and 133–140; these read GFDIGGTK and GVGGGLIF. Residues H157, C177, C179, and C184 each coordinate Zn(2+).

This sequence belongs to the ROK (NagC/XylR) family. NagK subfamily.

The enzyme catalyses N-acetyl-D-glucosamine + ATP = N-acetyl-D-glucosamine 6-phosphate + ADP + H(+). Its pathway is cell wall biogenesis; peptidoglycan recycling. Functionally, catalyzes the phosphorylation of N-acetyl-D-glucosamine (GlcNAc) derived from cell-wall degradation, yielding GlcNAc-6-P. This chain is N-acetyl-D-glucosamine kinase, found in Shigella boydii serotype 4 (strain Sb227).